A 628-amino-acid chain; its full sequence is DNA-directed RNA polymerase subunit gamma (628 aa).

The Zn(2+) site is built by C71, C73, C86, and C89. Residues D467, D469, and D471 each contribute to the Mg(2+) site.

The protein belongs to the RNA polymerase beta' chain family. RpoC1 subfamily. In terms of assembly, in cyanobacteria the RNAP catalytic core is composed of 2 alpha, 1 beta, 1 beta', 1 gamma and 1 omega subunit. When a sigma factor is associated with the core the holoenzyme is formed, which can initiate transcription. The cofactor is Mg(2+). Zn(2+) serves as cofactor.

It catalyses the reaction RNA(n) + a ribonucleoside 5'-triphosphate = RNA(n+1) + diphosphate. Its function is as follows. DNA-dependent RNA polymerase catalyzes the transcription of DNA into RNA using the four ribonucleoside triphosphates as substrates. The sequence is that of DNA-directed RNA polymerase subunit gamma from Crocosphaera subtropica (strain ATCC 51142 / BH68) (Cyanothece sp. (strain ATCC 51142)).